A 214-amino-acid polypeptide reads, in one-letter code: Fruiting body protein SC14 (214 aa).

An N-terminal signal peptide occupies residues 1 to 18; the sequence is MKLNIAILLAALAATASA. Residues Asn-61 and Asn-144 are each glycosylated (N-linked (GlcNAc...) asparagine). The SCP domain occupies 72 to 195; sequence LTAHNDERAQ…KSLWYYVCNY (124 aa).

The protein belongs to the CRISP family.

Its subcellular location is the secreted. This chain is Fruiting body protein SC14 (SC14), found in Schizophyllum commune (Split gill fungus).